The chain runs to 123 residues: Small ribosomal subunit protein uS12c (123 aa).

Belongs to the universal ribosomal protein uS12 family. As to quaternary structure, part of the 30S ribosomal subunit.

It is found in the plastid. The protein localises to the chloroplast. With S4 and S5 plays an important role in translational accuracy. Located at the interface of the 30S and 50S subunits. In Pinus thunbergii (Japanese black pine), this protein is Small ribosomal subunit protein uS12c (rps12).